A 562-amino-acid polypeptide reads, in one-letter code: Phosphomethylpyrimidine synthase (562 aa).

Substrate-binding positions include N179, M208, Y237, H273, 293–295 (SRG), 334–337 (DGLR), and E373. A Zn(2+)-binding site is contributed by H377. Y400 provides a ligand contact to substrate. Zn(2+) is bound at residue H441. The [4Fe-4S] cluster site is built by C521, C524, and C529.

Belongs to the ThiC family. Requires [4Fe-4S] cluster as cofactor.

The enzyme catalyses 5-amino-1-(5-phospho-beta-D-ribosyl)imidazole + S-adenosyl-L-methionine = 4-amino-2-methyl-5-(phosphooxymethyl)pyrimidine + CO + 5'-deoxyadenosine + formate + L-methionine + 3 H(+). The protein operates within cofactor biosynthesis; thiamine diphosphate biosynthesis. Catalyzes the synthesis of the hydroxymethylpyrimidine phosphate (HMP-P) moiety of thiamine from aminoimidazole ribotide (AIR) in a radical S-adenosyl-L-methionine (SAM)-dependent reaction. In Geobacillus kaustophilus (strain HTA426), this protein is Phosphomethylpyrimidine synthase.